Consider the following 117-residue polypeptide: MNSPGLRKPTIWRPLLLLFPLLALLLSMSSPRLPDEVMLHITPLHQGMTLPDGFYIYQRLNERGIAIKSITPENNSIIVRLSSPEQSGAAKEILSIALPNTVVIAQRTHGTIRVARS.

The Cytoplasmic segment spans residues 1-9; sequence MNSPGLRKP. The helical transmembrane segment at 10-29 threads the bilayer; sequence TIWRPLLLLFPLLALLLSMS. Over 30-117 the chain is Periplasmic; the sequence is SPRLPDEVML…THGTIRVARS (88 aa).

Belongs to the MzrA family. Interacts with EnvZ.

Its subcellular location is the cell inner membrane. Functionally, modulates the activity of the EnvZ/OmpR two-component regulatory system, probably by directly modulating EnvZ enzymatic activity and increasing stability of phosphorylated OmpR. The protein is Modulator protein MzrA of Dickeya zeae (strain Ech586) (Dickeya dadantii (strain Ech586)).